The sequence spans 655 residues: p-hydroxybenzoic acid efflux pump subunit AaeB (655 aa).

11 helical membrane-spanning segments follow: residues 13–33 (FAVK…HFQL), 38–58 (WAVL…GGEP), 69–89 (LRII…ISMI), 93–113 (LLMI…SSLV), 121–141 (WGLS…EPLL), 152–172 (EIVI…PRSI), 370–390 (LFWL…IAVV), 407–427 (FIYG…VIIP), 431–451 (QSML…GIEV), 459–479 (MGAL…TFHF), and 482–502 (FLDS…VILL).

It belongs to the aromatic acid exporter ArAE (TC 2.A.85) family.

It is found in the cell inner membrane. In terms of biological role, forms an efflux pump with AaeA. Could function as a metabolic relief valve, allowing to eliminate certain compounds when they accumulate to high levels in the cell. This Salmonella enteritidis PT4 (strain P125109) protein is p-hydroxybenzoic acid efflux pump subunit AaeB.